We begin with the raw amino-acid sequence, 35 residues long: Natriuretic peptide TNPa (35 aa).

A disulfide bridge connects residues cysteine 9 and cysteine 25.

As to expression, expressed by the venom gland.

It is found in the secreted. Its function is as follows. Snake venom natriuretic peptide that exhibits vasoactive and probable hypotensive activity. Is only weakly active on natriuretic peptide receptor-C (NPR3). Stimulates cGMP production through the natriuretic peptide receptor 1 (NPR1) with moderate potencies for the rat NPR1 (EC(50)=2020 nM), and very weak potencies over human NPR1 (15% activation at 10 uM). In vivo, does not impact systolic and diastolic blood pressure, as well as heart rate, when intravenously injected in conscious rabbits. Does not affect the bradycardia due to cardiac afferent stimulation (Bezold-Jarisch reflex). This is Natriuretic peptide TNPa from Oxyuranus microlepidotus (Inland taipan).